Reading from the N-terminus, the 417-residue chain is Gamma-glutamyl phosphate reductase (417 aa).

This sequence belongs to the gamma-glutamyl phosphate reductase family.

It localises to the cytoplasm. The catalysed reaction is L-glutamate 5-semialdehyde + phosphate + NADP(+) = L-glutamyl 5-phosphate + NADPH + H(+). Its pathway is amino-acid biosynthesis; L-proline biosynthesis; L-glutamate 5-semialdehyde from L-glutamate: step 2/2. Functionally, catalyzes the NADPH-dependent reduction of L-glutamate 5-phosphate into L-glutamate 5-semialdehyde and phosphate. The product spontaneously undergoes cyclization to form 1-pyrroline-5-carboxylate. The sequence is that of Gamma-glutamyl phosphate reductase from Enterococcus faecalis (strain ATCC 700802 / V583).